Consider the following 365-residue polypeptide: Histidinol-phosphate aminotransferase (365 aa).

Lys-220 is modified (N6-(pyridoxal phosphate)lysine).

The protein belongs to the class-II pyridoxal-phosphate-dependent aminotransferase family. Histidinol-phosphate aminotransferase subfamily. In terms of assembly, homodimer. Pyridoxal 5'-phosphate is required as a cofactor.

It catalyses the reaction L-histidinol phosphate + 2-oxoglutarate = 3-(imidazol-4-yl)-2-oxopropyl phosphate + L-glutamate. It functions in the pathway amino-acid biosynthesis; L-histidine biosynthesis; L-histidine from 5-phospho-alpha-D-ribose 1-diphosphate: step 7/9. In Neisseria meningitidis serogroup A / serotype 4A (strain DSM 15465 / Z2491), this protein is Histidinol-phosphate aminotransferase.